Consider the following 432-residue polypeptide: Pachytene checkpoint protein 2 homolog (432 aa).

An N-acetylmethionine modification is found at M1. Position 179–186 (179–186 (GPPGTGKT)) interacts with ATP.

It belongs to the AAA ATPase family. PCH2 subfamily. In terms of assembly, specifically interacts with the ligand binding domain of the thyroid receptor (TR). This interaction does not require the presence of thyroid hormone for its interaction. Interacts with HPV16 E1. Interacts with proteasome subunit PSMA8; to participate in meiosis progression during spermatogenesis.

Functionally, plays a key role in chromosome recombination and chromosome structure development during meiosis. Required at early steps in meiotic recombination that leads to non-crossovers pathways. Also needed for efficient completion of homologous synapsis by influencing crossover distribution along the chromosomes affecting both crossovers and non-crossovers pathways. Also required for development of higher-order chromosome structures and is needed for synaptonemal-complex formation. In males, required for efficient synapsis of the sex chromosomes and for sex body formation. Promotes early steps of the DNA double-strand breaks (DSBs) repair process upstream of the assembly of RAD51 complexes. Required for depletion of HORMAD1 and HORMAD2 from synapsed chromosomes. Plays a role in mitotic spindle assembly checkpoint (SAC) activation. The polypeptide is Pachytene checkpoint protein 2 homolog (TRIP13) (Homo sapiens (Human)).